The primary structure comprises 500 residues: Probable glycine dehydrogenase (decarboxylating) subunit 2 (500 aa).

Lys-273 is subject to N6-(pyridoxal phosphate)lysine.

This sequence belongs to the GcvP family. C-terminal subunit subfamily. The glycine cleavage system is composed of four proteins: P, T, L and H. In this organism, the P 'protein' is a heterodimer of two subunits. Requires pyridoxal 5'-phosphate as cofactor.

It carries out the reaction N(6)-[(R)-lipoyl]-L-lysyl-[glycine-cleavage complex H protein] + glycine + H(+) = N(6)-[(R)-S(8)-aminomethyldihydrolipoyl]-L-lysyl-[glycine-cleavage complex H protein] + CO2. Functionally, the glycine cleavage system catalyzes the degradation of glycine. The P protein binds the alpha-amino group of glycine through its pyridoxal phosphate cofactor; CO(2) is released and the remaining methylamine moiety is then transferred to the lipoamide cofactor of the H protein. The sequence is that of Probable glycine dehydrogenase (decarboxylating) subunit 2 from Rhodopirellula baltica (strain DSM 10527 / NCIMB 13988 / SH1).